We begin with the raw amino-acid sequence, 305 residues long: Methionyl-tRNA formyltransferase (305 aa).

111 to 114 provides a ligand contact to (6S)-5,6,7,8-tetrahydrofolate; that stretch reads SLLP.

It belongs to the Fmt family.

The enzyme catalyses L-methionyl-tRNA(fMet) + (6R)-10-formyltetrahydrofolate = N-formyl-L-methionyl-tRNA(fMet) + (6S)-5,6,7,8-tetrahydrofolate + H(+). Its function is as follows. Attaches a formyl group to the free amino group of methionyl-tRNA(fMet). The formyl group appears to play a dual role in the initiator identity of N-formylmethionyl-tRNA by promoting its recognition by IF2 and preventing the misappropriation of this tRNA by the elongation apparatus. The polypeptide is Methionyl-tRNA formyltransferase (Helicobacter acinonychis (strain Sheeba)).